A 578-amino-acid polypeptide reads, in one-letter code: Nuclear receptor subfamily 1 group D member 2 (578 aa).

Residues 1-60 (MELNAGGVIAYISSSSSASSPASCHSEGSENSFQSSSSSVPSSPNSSNCDANGNPKNTDV) are required for phosphorylation by CSNK1E and cytoplasmic localization. The segment at 1–99 (MELNAGGVIA…HSGMTKFSGM (99 aa)) is modulating. Over residues 13–47 (SSSSSASSPASCHSEGSENSFQSSSSSVPSSPNSS) the composition is skewed to low complexity. Positions 13–89 (SSSSSASSPA…KPGAPGMTKS (77 aa)) are disordered. At Ser-46 the chain carries Phosphoserine; by GSK3-beta. Residues 48–61 (NCDANGNPKNTDVS) are compositionally biased toward polar residues. Residues 100–176 (VLLCKVCGDV…VGMSRDAVRF (77 aa)) constitute a DNA-binding region (nuclear receptor). NR C4-type zinc fingers lie at residues 103-123 (CKVC…CEGC) and 140-164 (CLKN…FKKC). An N6-acetyllysine; by KAT5 mark is found at Lys-162 and Lys-163. Residues 214-247 (EPHEQSVPPAQEQLRPKPQLEQENIKSTPPPSDF) form a disordered region. Basic and acidic residues predominate over residues 227–237 (LRPKPQLEQEN). Intrachain disulfides connect Cys-336/Cys-342 and Cys-373/Cys-383. The region spanning 368-578 (RNSYLCSTGG…EELLAFKVHP (211 aa)) is the NR LBD domain. 2 residues coordinate heme: Cys-383 and His-567. The segment at 396-578 (SGHEIWEEFS…EELLAFKVHP (183 aa)) is interaction with ZNHIT1.

It belongs to the nuclear hormone receptor family. NR1 subfamily. In terms of assembly, binds DNA as a monomer or a homodimer. Interacts with NCOA5 coactivator, leading to a strong increase of transcription of target genes. Interacts (via N-terminus) with KAT5. Interacts (via C-terminus) with HDAC1. Interacts with ZNHIT1. Interacts with SIAH2. Post-translationally, deacetylated by HDAC1. Acetylation and deacetylation regulate its transcriptional regulatory activity. Under more reducing intracellular redox conditions, Cys-383 is in its heme-bound state, which is optimal for recruitment of the NCOR1/HDAC3 corepressor complex and repression of target genes. When subjected to oxidative stress conditions, Cys-383 undergoes oxidation to form a disulfide bridge with Cys-373, also triggering a ligand switch that results in release of bound heme and derepression of target genes. In terms of processing, ubiquitinated by SIAH2; leading to its proteasomal degradation. Post-translationally, phosphorylated by CSNK1E; phosphorylation enhances its cytoplasmic localization.

It is found in the nucleus. The protein resides in the cytoplasm. With respect to regulation, the heme-bound form can bind gaseous signaling molecules such as CO and nitric oxide (NO) and NO can reverse its transcriptional repressor activity. In terms of biological role, transcriptional repressor which coordinates circadian rhythm and metabolic pathways in a heme-dependent manner. Integral component of the complex transcription machinery that governs circadian rhythmicity and forms a critical negative limb of the circadian clock by directly repressing the expression of core clock components BMAL1 and CLOCK. Also regulates genes involved in metabolic functions, including lipid metabolism and the inflammatory response. Acts as a receptor for heme which stimulates its interaction with the NCOR1/HDAC3 corepressor complex, enhancing transcriptional repression. Recognizes two classes of DNA response elements within the promoter of its target genes and can bind to DNA as either monomers or homodimers, depending on the nature of the response element. Binds as a monomer to a response element composed of the consensus half-site motif 5'-[A/G]GGTCA-3' preceded by an A/T-rich 5' sequence (RevRE), or as a homodimer to a direct repeat of the core motif spaced by two nuclegotides (RevDR-2). Acts as a potent competitive repressor of ROR alpha (RORA) function and also negatively regulates the expression of NR1D1. Regulates lipid and energy homeostasis in the skeletal muscle via repression of genes involved in lipid metabolism and myogenesis including: CD36, FABP3, FABP4, UCP3, SCD1 and MSTN. Regulates hepatic lipid metabolism via the repression of APOC3. Represses gene expression at a distance in macrophages by inhibiting the transcription of enhancer-derived RNAs (eRNAs). In addition to its activity as a repressor, can also act as a transcriptional activator. Acts as a transcriptional activator of the sterol regulatory element-binding protein 1 (SREBF1) and the inflammatory mediator interleukin-6 (IL6) in the skeletal muscle. Plays a role in the regulation of circadian sleep/wake cycle; essential for maintaining wakefulness during the dark phase or active period. Key regulator of skeletal muscle mitochondrial function; negatively regulates the skeletal muscle expression of core clock genes and genes involved in mitochondrial biogenesis, fatty acid beta-oxidation and lipid metabolism. May play a role in the circadian control of neutrophilic inflammation in the lung. This chain is Nuclear receptor subfamily 1 group D member 2, found in Rattus norvegicus (Rat).